A 469-amino-acid polypeptide reads, in one-letter code: 23S rRNA (uracil(1939)-C(5))-methyltransferase RlmD (469 aa).

The TRAM domain maps to 11 to 69; the sequence is PKTSNQRLTVTVDKLDMNGVGVARWQNKPIFIAGVLPDEIVDVKVIEQKSKYARAKLIS. The [4Fe-4S] cluster site is built by C82, C88, C91, and C178. Q300, F329, N334, E350, D377, and D399 together coordinate S-adenosyl-L-methionine. C425 serves as the catalytic Nucleophile.

The protein belongs to the class I-like SAM-binding methyltransferase superfamily. RNA M5U methyltransferase family. RlmD subfamily.

It catalyses the reaction uridine(1939) in 23S rRNA + S-adenosyl-L-methionine = 5-methyluridine(1939) in 23S rRNA + S-adenosyl-L-homocysteine + H(+). Its function is as follows. Catalyzes the formation of 5-methyl-uridine at position 1939 (m5U1939) in 23S rRNA. The sequence is that of 23S rRNA (uracil(1939)-C(5))-methyltransferase RlmD from Colwellia psychrerythraea (strain 34H / ATCC BAA-681) (Vibrio psychroerythus).